The sequence spans 376 residues: Chaperone protein DnaJ (376 aa).

One can recognise a J domain in the interval 5 to 70; it reads DYYEVLGVKK…QKRAAYDQYG (66 aa). The segment at 131–209 adopts a CR-type zinc-finger fold; that stretch reads GVTKEIRIPT…CHGHGRVEKS (79 aa). Zn(2+) contacts are provided by C144, C147, C161, C164, C183, C186, C197, and C200. CXXCXGXG motif repeat units follow at residues 144–151, 161–168, 183–190, and 197–204; these read CDVCHGSG, CSTCRGAG, CPTCHGSG, and CNKCHGHG.

The protein belongs to the DnaJ family. As to quaternary structure, homodimer. Zn(2+) serves as cofactor.

The protein localises to the cytoplasm. Participates actively in the response to hyperosmotic and heat shock by preventing the aggregation of stress-denatured proteins and by disaggregating proteins, also in an autonomous, DnaK-independent fashion. Unfolded proteins bind initially to DnaJ; upon interaction with the DnaJ-bound protein, DnaK hydrolyzes its bound ATP, resulting in the formation of a stable complex. GrpE releases ADP from DnaK; ATP binding to DnaK triggers the release of the substrate protein, thus completing the reaction cycle. Several rounds of ATP-dependent interactions between DnaJ, DnaK and GrpE are required for fully efficient folding. Also involved, together with DnaK and GrpE, in the DNA replication of plasmids through activation of initiation proteins. The sequence is that of Chaperone protein DnaJ from Yersinia enterocolitica serotype O:8 / biotype 1B (strain NCTC 13174 / 8081).